Here is a 272-residue protein sequence, read N- to C-terminus: Formamidopyrimidine-DNA glycosylase (272 aa).

Pro2 functions as the Schiff-base intermediate with DNA in the catalytic mechanism. The Proton donor role is filled by Glu3. Lys58 functions as the Proton donor; for beta-elimination activity in the catalytic mechanism. His94, Arg112, and Arg153 together coordinate DNA. The FPG-type zinc finger occupies 238 to 272 (FVYDRAGEPCRVCGAPIRQIVQGQRSTYFCPNCQR). Arg262 acts as the Proton donor; for delta-elimination activity in catalysis.

The protein belongs to the FPG family. In terms of assembly, monomer. It depends on Zn(2+) as a cofactor.

The enzyme catalyses Hydrolysis of DNA containing ring-opened 7-methylguanine residues, releasing 2,6-diamino-4-hydroxy-5-(N-methyl)formamidopyrimidine.. It carries out the reaction 2'-deoxyribonucleotide-(2'-deoxyribose 5'-phosphate)-2'-deoxyribonucleotide-DNA = a 3'-end 2'-deoxyribonucleotide-(2,3-dehydro-2,3-deoxyribose 5'-phosphate)-DNA + a 5'-end 5'-phospho-2'-deoxyribonucleoside-DNA + H(+). Involved in base excision repair of DNA damaged by oxidation or by mutagenic agents. Acts as a DNA glycosylase that recognizes and removes damaged bases. Has a preference for oxidized purines, such as 7,8-dihydro-8-oxoguanine (8-oxoG). Has AP (apurinic/apyrimidinic) lyase activity and introduces nicks in the DNA strand. Cleaves the DNA backbone by beta-delta elimination to generate a single-strand break at the site of the removed base with both 3'- and 5'-phosphates. In Burkholderia mallei (strain NCTC 10229), this protein is Formamidopyrimidine-DNA glycosylase.